A 99-amino-acid polypeptide reads, in one-letter code: Small integral membrane protein 14 (99 aa).

Residues 1–49 are Lumenal-facing; it reads MAEGGFDPCECICSHEHAMRRLINLLRQSQSYCTDTECLRELPGPSGDS. A helical transmembrane segment spans residues 50–70; sequence GISITVILMAWMVIAVLLFLL. The Cytoplasmic segment spans residues 71–99; sequence RPPNLRGSSLPGKPSSPHSGQDPPAPPVD. The tract at residues 77 to 99 is disordered; sequence GSSLPGKPSSPHSGQDPPAPPVD.

It localises to the endoplasmic reticulum membrane. The polypeptide is Small integral membrane protein 14 (Smim14) (Rattus norvegicus (Rat)).